A 212-amino-acid chain; its full sequence is Pyridoxine/pyridoxamine 5'-phosphate oxidase 1 (212 aa).

Substrate-binding positions include 8–11 (RTDY) and Lys-66. Residues 61–66 (RIVLLK), 76–77 (FT), Lys-83, and Gln-105 contribute to the FMN site. Substrate-binding residues include Tyr-123, Arg-127, and Ser-131. FMN-binding positions include 140-141 (QS) and Trp-184. Residue 190 to 192 (RLH) coordinates substrate. An FMN-binding site is contributed by Arg-194.

Belongs to the pyridoxamine 5'-phosphate oxidase family. As to quaternary structure, homodimer. The cofactor is FMN.

It catalyses the reaction pyridoxamine 5'-phosphate + O2 + H2O = pyridoxal 5'-phosphate + H2O2 + NH4(+). The catalysed reaction is pyridoxine 5'-phosphate + O2 = pyridoxal 5'-phosphate + H2O2. The protein operates within cofactor metabolism; pyridoxal 5'-phosphate salvage; pyridoxal 5'-phosphate from pyridoxamine 5'-phosphate: step 1/1. Its pathway is cofactor metabolism; pyridoxal 5'-phosphate salvage; pyridoxal 5'-phosphate from pyridoxine 5'-phosphate: step 1/1. In terms of biological role, catalyzes the oxidation of either pyridoxine 5'-phosphate (PNP) or pyridoxamine 5'-phosphate (PMP) into pyridoxal 5'-phosphate (PLP). This is Pyridoxine/pyridoxamine 5'-phosphate oxidase 1 from Ralstonia nicotianae (strain ATCC BAA-1114 / GMI1000) (Ralstonia solanacearum).